A 369-amino-acid chain; its full sequence is MSALGESRTRLCDQFAFVSGSDSAVAQCYLAENEWDMERALNSFFEAHMDSVFDEEAEKTEVTGNKRKDDTAEASGTKKKLKTDNADCIDLTAEEPTCSITVNSKENQAENGTAKSEVEDSKLSIISWNVDGLDTLNLADRARGLCSYLALYTPDVVFLQELIPAYVQYLKKRAVSYLFFEGSDDGYFTGIMLRKSRVKFLESEIICFPTTQMMRNLLIAQVTFSGQKLYLMTSHLESCKNQSQERTKQLRVVLQKIKEAPEDAIVIFAGDTNLRDAEVANVGGLPAGVCDVWEQLGKQEHCRYTWDTKANSNKTVPYVSRCRFDRIFLRSAKTAPPVTPDHMALIGMEKLDCGRYTSDHWGIYCTFNT.

The tract at residues 58–77 is disordered; that stretch reads EKTEVTGNKRKDDTAEASGT. The span at 59–71 shows a compositional bias: basic and acidic residues; the sequence is KTEVTGNKRKDDT. An interaction with 5' end of substrate DNA region spans residues 129 to 133; the sequence is NVDGL. Mg(2+) is bound by residues aspartate 131 and glutamate 161. The tract at residues 235–240 is interaction with 5' end of substrate DNA; it reads HLESCK. Aspartate 271 serves as the catalytic Proton donor/acceptor. Residues 273-275 form an interaction with 5' end of substrate DNA region; that stretch reads NLR.

It belongs to the CCR4/nocturin family. TTRAP/TDP2 subfamily. The cofactor is Mg(2+). Mn(2+) serves as cofactor. Expressed ubiquitously during blastula stages and throughout gastrulation. Shortly after shield formation, expressed weakly in dorsal forerunner cells (DFCs). Between somite stages 5 and 9, expressed in the tailbud and around the Kupffer's vesicle at a higher level than the more uniform expression in the embryo.

It localises to the nucleus. It is found in the PML body. DNA repair enzyme that can remove a variety of covalent adducts from DNA through hydrolysis of a 5'-phosphodiester bond, giving rise to DNA with a free 5' phosphate. Catalyzes the hydrolysis of dead-end complexes between DNA and the topoisomerase 2 (top2) active site tyrosine residue. Hydrolyzes 5'-phosphoglycolates on protruding 5' ends on DNA double-strand breaks (DSBs) due to DNA damage by radiation and free radicals. Controls gastrulation movements and left/right (L/R) axis determination via smad3-mediated regulation of cdh1/e-cadherin. Regulates the formation of Kupffer's vesicle, a signaling center essential for establishing L/R asymmetry. Modulates smad3 activity through modulating nodal-acvr1/akt4 signaling. This chain is Tyrosyl-DNA phosphodiesterase 2 (tdp2), found in Danio rerio (Zebrafish).